The primary structure comprises 535 residues: Light-independent protochlorophyllide reductase subunit B (535 aa).

Asp36 serves as a coordination point for [4Fe-4S] cluster. Residue Asp292 is the Proton donor of the active site. 428-429 (GL) is a substrate binding site. Positions 446-483 (DEASPSESAPHASNGHEDVAGGSTAQSVPSHAATEGDG) are disordered.

This sequence belongs to the ChlB/BchB/BchZ family. In terms of assembly, protochlorophyllide reductase is composed of three subunits; BchL, BchN and BchB. Forms a heterotetramer of two BchB and two BchN subunits. [4Fe-4S] cluster serves as cofactor.

It carries out the reaction chlorophyllide a + oxidized 2[4Fe-4S]-[ferredoxin] + 2 ADP + 2 phosphate = protochlorophyllide a + reduced 2[4Fe-4S]-[ferredoxin] + 2 ATP + 2 H2O. It participates in porphyrin-containing compound metabolism; bacteriochlorophyll biosynthesis (light-independent). Its function is as follows. Component of the dark-operative protochlorophyllide reductase (DPOR) that uses Mg-ATP and reduced ferredoxin to reduce ring D of protochlorophyllide (Pchlide) to form chlorophyllide a (Chlide). This reaction is light-independent. The NB-protein (BchN-BchB) is the catalytic component of the complex. This Chlorobium limicola (strain DSM 245 / NBRC 103803 / 6330) protein is Light-independent protochlorophyllide reductase subunit B.